The sequence spans 547 residues: Chaperonin GroEL (547 aa).

Residues 30–33, Lys-51, 87–91, Gly-415, and Asp-496 each bind ATP; these read TLGP and DGTTT.

This sequence belongs to the chaperonin (HSP60) family. In terms of assembly, forms a cylinder of 14 subunits composed of two heptameric rings stacked back-to-back. Interacts with the co-chaperonin GroES.

The protein localises to the cytoplasm. It carries out the reaction ATP + H2O + a folded polypeptide = ADP + phosphate + an unfolded polypeptide.. In terms of biological role, together with its co-chaperonin GroES, plays an essential role in assisting protein folding. The GroEL-GroES system forms a nano-cage that allows encapsulation of the non-native substrate proteins and provides a physical environment optimized to promote and accelerate protein folding. The chain is Chaperonin GroEL from Actinobacillus pleuropneumoniae serotype 5b (strain L20).